The following is a 320-amino-acid chain: o-succinylbenzoate synthase (320 aa).

Catalysis depends on lysine 133, which acts as the Proton donor. Residues aspartate 161, glutamate 190, and aspartate 213 each coordinate Mg(2+). Lysine 235 functions as the Proton acceptor in the catalytic mechanism.

Belongs to the mandelate racemase/muconate lactonizing enzyme family. MenC type 1 subfamily. A divalent metal cation is required as a cofactor.

It carries out the reaction (1R,6R)-6-hydroxy-2-succinyl-cyclohexa-2,4-diene-1-carboxylate = 2-succinylbenzoate + H2O. It participates in quinol/quinone metabolism; 1,4-dihydroxy-2-naphthoate biosynthesis; 1,4-dihydroxy-2-naphthoate from chorismate: step 4/7. It functions in the pathway quinol/quinone metabolism; menaquinone biosynthesis. Its function is as follows. Converts 2-succinyl-6-hydroxy-2,4-cyclohexadiene-1-carboxylate (SHCHC) to 2-succinylbenzoate (OSB). The protein is o-succinylbenzoate synthase of Shigella flexneri.